A 260-amino-acid chain; its full sequence is F-actin-capping protein subunit beta (260 aa).

It belongs to the F-actin-capping protein beta subunit family. As to quaternary structure, component of the F-actin capping complex, composed of a heterodimer of an alpha and a beta subunit.

It is found in the cytoplasm. It localises to the cytoskeleton. The protein resides in the actin patch. In terms of biological role, F-actin-capping proteins bind in a Ca(2+)-independent manner to the fast growing ends of actin filaments (barbed end) thereby blocking the exchange of subunits at these ends. Unlike other capping proteins (such as gelsolin and severin), these proteins do not sever actin filaments. The protein is F-actin-capping protein subunit beta (CAP2) of Yarrowia lipolytica (strain CLIB 122 / E 150) (Yeast).